A 445-amino-acid polypeptide reads, in one-letter code: Phosphoglucosamine mutase 1 (445 aa).

Catalysis depends on S102, which acts as the Phosphoserine intermediate. 4 residues coordinate Mg(2+): S102, D241, D243, and D245. S102 is subject to Phosphoserine.

It belongs to the phosphohexose mutase family. Mg(2+) is required as a cofactor. Activated by phosphorylation.

It carries out the reaction alpha-D-glucosamine 1-phosphate = D-glucosamine 6-phosphate. Functionally, catalyzes the conversion of glucosamine-6-phosphate to glucosamine-1-phosphate. The protein is Phosphoglucosamine mutase 1 of Shewanella sp. (strain MR-4).